A 208-amino-acid chain; its full sequence is Large ribosomal subunit protein uL3 (208 aa).

The interval 117-149 is disordered; that stretch reads FQGVIKRHGQSRGPMAHGSRYHRRPGSMGPVSP.

Belongs to the universal ribosomal protein uL3 family. As to quaternary structure, part of the 50S ribosomal subunit. Forms a cluster with proteins L14 and L19.

One of the primary rRNA binding proteins, it binds directly near the 3'-end of the 23S rRNA, where it nucleates assembly of the 50S subunit. This Streptococcus equi subsp. equi (strain 4047) protein is Large ribosomal subunit protein uL3.